Here is a 211-residue protein sequence, read N- to C-terminus: ATP phosphoribosyltransferase (211 aa).

It belongs to the ATP phosphoribosyltransferase family. Short subfamily. In terms of assembly, heteromultimer composed of HisG and HisZ subunits.

Its subcellular location is the cytoplasm. It catalyses the reaction 1-(5-phospho-beta-D-ribosyl)-ATP + diphosphate = 5-phospho-alpha-D-ribose 1-diphosphate + ATP. It participates in amino-acid biosynthesis; L-histidine biosynthesis; L-histidine from 5-phospho-alpha-D-ribose 1-diphosphate: step 1/9. Its function is as follows. Catalyzes the condensation of ATP and 5-phosphoribose 1-diphosphate to form N'-(5'-phosphoribosyl)-ATP (PR-ATP). Has a crucial role in the pathway because the rate of histidine biosynthesis seems to be controlled primarily by regulation of HisG enzymatic activity. This chain is ATP phosphoribosyltransferase (hisG), found in Pseudomonas aeruginosa (strain ATCC 15692 / DSM 22644 / CIP 104116 / JCM 14847 / LMG 12228 / 1C / PRS 101 / PAO1).